The chain runs to 70 residues: Waprin-Thr1 (70 aa).

Positions 1–19 are cleaved as a signal peptide; that stretch reads MKARLLLLSVVILVGMVSA. The WAP domain maps to 20–70; the sequence is ENEKAGSCPDVNQPIPPLGLCRNMCESDSGCPNNEKCCKNGCGFMTCSRPR. 4 cysteine pairs are disulfide-bonded: C27–C57, C40–C61, C44–C56, and C50–C66.

It belongs to the venom waprin family. As to expression, expressed by the venom gland.

The protein resides in the secreted. Functionally, damages membranes of susceptible bacteria. Has no hemolytic activity. Not toxic to mice. Does not inhibit the proteinases elastase and cathepsin G. The sequence is that of Waprin-Thr1 from Thrasops jacksonii (Jackson's black tree snake).